Consider the following 182-residue polypeptide: Peptidoglycan-recognition protein SB2 (182 aa).

The N-terminal stretch at M1–G17 is a signal peptide. An N-acetylmuramoyl-L-alanine amidase domain is found at P40 to G165. Residue H47 coordinates Zn(2+). The cysteines at positions 54 and 60 are disulfide-linked. N149 is a glycosylation site (N-linked (GlcNAc...) asparagine). Residues H155 and C163 each contribute to the Zn(2+) site.

The protein belongs to the N-acetylmuramoyl-L-alanine amidase 2 family. Zn(2+) is required as a cofactor.

It localises to the secreted. The catalysed reaction is Hydrolyzes the link between N-acetylmuramoyl residues and L-amino acid residues in certain cell-wall glycopeptides.. N-acetylmuramyl-L-alanine amidase involved in innate immunity by degrading bacterial peptidoglycans (PGN). Probably plays a scavenger role by digesting biologically active PGN into biologically inactive fragments. Has no direct bacteriolytic activity. The chain is Peptidoglycan-recognition protein SB2 (PGRP-SB2) from Drosophila melanogaster (Fruit fly).